The sequence spans 391 residues: Immunoglobulin heavy constant alpha 2 (391 aa).

Over 1-357 (ASPTSPKVFP…TPGANLWPTT (357 aa)) the chain is Extracellular. 3 Ig-like domains span residues 6–98 (PKVF…QDVT), 112–207 (PRLS…ANIT), and 215–317 (PEVH…KTID). The cysteines at positions 26 and 85 are disulfide-linked. N-linked (GlcNAc...) asparagine glycosylation is present at Asn-47. Asn-92 is a glycosylation site (N-linked (GlcNAc...) (complex) asparagine). 2 disulfides stabilise this stretch: Cys-110–Cys-167 and Cys-134–Cys-191. N-linked (GlcNAc...) asparagine glycosylation occurs at Asn-131. N-linked (GlcNAc...) (complex) asparagine glycosylation is present at Asn-205. A disulfide bridge links Cys-237 with Cys-300. The N-linked (GlcNAc...) (complex) asparagine glycan is linked to Asp-327. Residues 358–379 (ITFLTLFLLSLFYSTALTVTSV) traverse the membrane as a helical segment. The Cytoplasmic segment spans residues 380 to 391 (RGPSGKREGPQY).

As to quaternary structure, immunoglobulins are composed of two identical heavy chains and two identical light chains; disulfide-linked. Monomeric or polymeric. Part of the secretory IgA (sIgA) complex that consists of two, four or five IgA monomers, and two additional non-Ig polypeptides, namely the JCHAIN and the secretory component (the proteolytic product of PIGR).

Its subcellular location is the secreted. The protein resides in the cell membrane. Constant region of immunoglobulin heavy chains. Immunoglobulins, also known as antibodies, are membrane-bound or secreted glycoproteins produced by B lymphocytes. In the recognition phase of humoral immunity, the membrane-bound immunoglobulins serve as receptors which, upon binding of a specific antigen, trigger the clonal expansion and differentiation of B lymphocytes into immunoglobulins-secreting plasma cells. Secreted immunoglobulins mediate the effector phase of humoral immunity, which results in the elimination of bound antigens. The antigen binding site is formed by the variable domain of one heavy chain, together with that of its associated light chain. Thus, each immunoglobulin has two antigen binding sites with remarkable affinity for a particular antigen. The variable domains are assembled by a process called V-(D)-J rearrangement and can then be subjected to somatic hypermutations which, after exposure to antigen and selection, allow affinity maturation for a particular antigen. Ig alpha is the major immunoglobulin class in body secretions. This chain is Immunoglobulin heavy constant alpha 2, found in Homo sapiens (Human).